Reading from the N-terminus, the 77-residue chain is U8-lycotoxin-Ls1d (77 aa).

The N-terminal stretch at 1–20 (MKLIIFTGLVLFAIVSLIEA) is a signal peptide. Positions 21-26 (QAENEK) are excised as a propeptide.

This sequence belongs to the neurotoxin 19 (CSTX) family. 08 (U8-Lctx) subfamily. Contains 4 disulfide bonds. As to expression, expressed by the venom gland.

It localises to the secreted. The sequence is that of U8-lycotoxin-Ls1d from Lycosa singoriensis (Wolf spider).